We begin with the raw amino-acid sequence, 278 residues long: Tumor necrosis factor ligand superfamily member 6 (278 aa).

Residues 1–77 (MQQPVNYPCP…SPLKKKDNIE (77 aa)) lie on the Cytoplasmic side of the membrane. Positions 26 to 68 (PGSVFSCPSSGPRGPGQRRPPPPPPPPSPLPPPSQPPPLPPLS) are disordered. The span at 33–42 (PSSGPRGPGQ) shows a compositional bias: low complexity. Over residues 43 to 68 (RRPPPPPPPPSPLPPPSQPPPLPPLS) the composition is skewed to pro residues. Residues 78–99 (LWLPVIFFMVLVALVGMGLGMY) traverse the membrane as a helical; Signal-anchor for type II membrane protein segment. The Extracellular segment spans residues 100 to 278 (QLFHLQKELA…SKTFFGLYKL (179 aa)). An N-linked (GlcNAc...) asparagine glycan is attached at N116. The segment covering 125–135 (EKQIANPSTPS) has biased composition (polar residues). Residues 125 to 147 (EKQIANPSTPSETKKPRSVAHLT) are disordered. Residues 142-278 (SVAHLTGNPR…SKTFFGLYKL (137 aa)) form the THD domain. C199 and C230 are disulfide-bonded. 2 N-linked (GlcNAc...) asparagine glycosylation sites follow: N247 and N257.

It belongs to the tumor necrosis factor family. In terms of assembly, homotrimer. Interacts with ARHGAP9, BAIAP2L1, BTK, CACNB3, CACNB4, CRK, DLG2, DNMBP, DOCK4, EPS8L3, FGR, FYB1, FYN, HCK, ITK, ITSN2, KALRN, LYN, MACC1, MIA, MPP4, MYO15A, NCF1, NCK1, NCK2, NCKIPSD, OSTF1, PIK3R1, PSTPIP1, RIMBP3C, SAMSN1, SH3GL3, SH3PXD2B, SH3PXD2A, SH3RF2, SKAP2, SNX33, SNX9, SORBS3, SPTA1, SRC, SRGAP1, SRGAP2, SRGAP3, TEC, TJP3 and YES1. In terms of processing, the soluble form derives from the membrane form by proteolytic processing. The membrane-bound form undergoes two successive intramembrane proteolytic cleavages. The first one is processed by ADAM10 producing an N-terminal fragment, which lacks the receptor-binding extracellular domain. This ADAM10-processed FasL (FasL APL) remnant form is still membrane anchored and further processed by SPPL2A that liberates the FasL intracellular domain (FasL ICD). FasL shedding by ADAM10 is a prerequisite for subsequent intramembrane cleavage by SPPL2A in T-cells. Post-translationally, phosphorylated by FGR on tyrosine residues; this is required for ubiquitination and subsequent internalization. N-glycosylated. In terms of processing, monoubiquitinated. In terms of tissue distribution, expressed in activated splenocytes and thymocytes. Moderate or weak expression found in small intestines, kidney and lung.

Its subcellular location is the cell membrane. The protein localises to the cytoplasmic vesicle lumen. The protein resides in the lysosome lumen. It is found in the secreted. It localises to the nucleus. Cytokine that binds to TNFRSF6/FAS, a receptor that transduces the apoptotic signal into cells. Involved in cytotoxic T-cell-mediated apoptosis, natural killer cell-mediated apoptosis and in T-cell development. Initiates fratricidal/suicidal activation-induced cell death (AICD) in antigen-activated T-cells contributing to the termination of immune responses. TNFRSF6/FAS-mediated apoptosis also has a role in the induction of peripheral tolerance. Binds to TNFRSF6B/DcR3, a decoy receptor that blocks apoptosis. Its function is as follows. Induces FAS-mediated activation of NF-kappa-B, initiating non-apoptotic signaling pathways. Can induce apoptosis but does not appear to be essential for this process. Functionally, cytoplasmic form induces gene transcription inhibition. This chain is Tumor necrosis factor ligand superfamily member 6 (Faslg), found in Rattus norvegicus (Rat).